We begin with the raw amino-acid sequence, 409 residues long: Phosphatidylserine decarboxylase proenzyme, mitochondrial (409 aa).

A mitochondrion-targeting transit peptide spans 1–52 (MATSVGHRCLGLLHGVAPWRSSLHPCEITALSQSLQPLRKLPFRAFRTDARK). The Mitochondrial matrix segment spans residues 53-63 (IHTAPARTMFL). Residues 64–82 (LRPVPILLATGGGYAGYRQ) form a helical membrane-spanning segment. Over 83–409 (YEKYRERELE…IRFGEALGSL (327 aa)) the chain is Mitochondrial intermembrane. Catalysis depends on charge relay system; for autoendoproteolytic cleavage activity residues Asp191, His267, and Ser378. Ser378 functions as the Schiff-base intermediate with substrate; via pyruvic acid; for decarboxylase activity in the catalytic mechanism. Position 378 is a pyruvic acid (Ser); by autocatalysis (Ser378).

The protein belongs to the phosphatidylserine decarboxylase family. PSD-B subfamily. Eukaryotic type I sub-subfamily. Heterodimer of a large membrane-associated beta subunit and a small pyruvoyl-containing alpha subunit. Requires pyruvate as cofactor. Is synthesized initially as an inactive proenzyme. Formation of the active enzyme involves a self-maturation process in which the active site pyruvoyl group is generated from an internal serine residue via an autocatalytic post-translational modification. Two non-identical subunits are generated from the proenzyme in this reaction, and the pyruvate is formed at the N-terminus of the alpha chain, which is derived from the carboxyl end of the proenzyme. The autoendoproteolytic cleavage occurs by a canonical serine protease mechanism, in which the side chain hydroxyl group of the serine supplies its oxygen atom to form the C-terminus of the beta chain, while the remainder of the serine residue undergoes an oxidative deamination to produce ammonia and the pyruvoyl prosthetic group on the alpha chain. During this reaction, the Ser that is part of the protease active site of the proenzyme becomes the pyruvoyl prosthetic group, which constitutes an essential element of the active site of the mature decarboxylase.

It localises to the mitochondrion inner membrane. It is found in the lipid droplet. The protein localises to the cytoplasm. The enzyme catalyses a 1,2-diacyl-sn-glycero-3-phospho-L-serine + H(+) = a 1,2-diacyl-sn-glycero-3-phosphoethanolamine + CO2. The protein operates within phospholipid metabolism; phosphatidylethanolamine biosynthesis. Functionally, catalyzes the formation of phosphatidylethanolamine (PtdEtn) from phosphatidylserine (PtdSer). Plays a central role in phospholipid metabolism and in the interorganelle trafficking of phosphatidylserine. May be involved in lipid droplet biogenesis at the endoplasmic reticulum membrane. The sequence is that of Phosphatidylserine decarboxylase proenzyme, mitochondrial from Pongo abelii (Sumatran orangutan).